The chain runs to 424 residues: Histidinol dehydrogenase homolog (424 aa).

Zn(2+) is bound by residues Q250 and H253. Active-site proton acceptor residues include E318 and H319. The Zn(2+) site is built by D352 and H411.

It belongs to the histidinol dehydrogenase family. Zn(2+) serves as cofactor.

The polypeptide is Histidinol dehydrogenase homolog (Shouchella clausii (strain KSM-K16) (Alkalihalobacillus clausii)).